The primary structure comprises 1928 residues: Myosin-1 (1928 aa).

The 64-residue stretch at 8–71 (SSNMIVWIPD…RISDVFPVNP (64 aa)) folds into the Myosin N-terminal SH3-like domain. Residues 75-791 (DKVENMSELT…VLADLEKQKD (717 aa)) enclose the Myosin motor domain. An ATP-binding site is contributed by 180–187 (GESGAGKT). The segment at 460 to 529 (IGLLDIAGFE…LQLTIDLIES (70 aa)) is actin-binding. Residues 629 to 641 (SSSAGVEANISNQ) are compositionally biased toward polar residues. The disordered stretch occupies residues 629–657 (SSSAGVEANISNQEVKKSARTSTFKTTSS). An IQ domain is found at 794–823 (LNNIMIKLTATIRGYTVRKEITYHLQKLKK). The stretch at 856–1911 (SSNDMTRTKK…FWKSRYESTM (1056 aa)) forms a coiled coil.

The protein belongs to the TRAFAC class myosin-kinesin ATPase superfamily. Myosin family.

Functionally, required for cell division. This is Myosin-1 (MYO1) from Saccharomyces cerevisiae (strain ATCC 204508 / S288c) (Baker's yeast).